Reading from the N-terminus, the 409-residue chain is NADH-quinone oxidoreductase subunit D (409 aa).

This sequence belongs to the complex I 49 kDa subunit family. In terms of assembly, NDH-1 is composed of 14 different subunits. Subunits NuoB, C, D, E, F, and G constitute the peripheral sector of the complex.

The protein resides in the cell inner membrane. It carries out the reaction a quinone + NADH + 5 H(+)(in) = a quinol + NAD(+) + 4 H(+)(out). Functionally, NDH-1 shuttles electrons from NADH, via FMN and iron-sulfur (Fe-S) centers, to quinones in the respiratory chain. The immediate electron acceptor for the enzyme in this species is believed to be ubiquinone. Couples the redox reaction to proton translocation (for every two electrons transferred, four hydrogen ions are translocated across the cytoplasmic membrane), and thus conserves the redox energy in a proton gradient. The chain is NADH-quinone oxidoreductase subunit D from Helicobacter pylori (strain Shi470).